A 383-amino-acid chain; its full sequence is Heme chaperone HemW (383 aa).

A Radical SAM core domain is found at 1–241 (MPKLPPLSLY…LTMAGYQQYE (241 aa)). Tyr10 is an S-adenosyl-L-methionine binding site. Positions 16, 20, and 23 each coordinate [4Fe-4S] cluster. S-adenosyl-L-methionine is bound by residues Gly70, 71–72 (GT), Glu103, Gln130, Arg142, and Asp167.

This sequence belongs to the anaerobic coproporphyrinogen-III oxidase family. HemW subfamily. Requires [4Fe-4S] cluster as cofactor.

It localises to the cytoplasm. In terms of biological role, probably acts as a heme chaperone, transferring heme to an unknown acceptor. Binds one molecule of heme per monomer, possibly covalently. Binds 1 [4Fe-4S] cluster. The cluster is coordinated with 3 cysteines and an exchangeable S-adenosyl-L-methionine. In Haemophilus influenzae (strain ATCC 51907 / DSM 11121 / KW20 / Rd), this protein is Heme chaperone HemW.